The primary structure comprises 445 residues: MRTDQVMLSNKNTNTCCVVSSSSSDPFLSSSENGVTTTNTSTQKRKRRPAGTPDPDAEVVSLSPRTLLESDRYICEICNQGFQRDQNLQMHRRRHKVPWKLLKRDNNIEVKKRVYVCPEPTCLHHNPCHALGDLVGIKKHFRRKHSNHKQWVCERCSKGYAVQSDYKAHLKTCGTRGHSCDCGRVFSRVESFIEHQDNCSARRVHREPPRPPQTAVTVPACSSRTASTVSTPSSETNYGGTVAVTTPQPLEGRPIHQRISSSILTNSSNNLNLELQLLPLSSNQNPNQENQQQKVKEPSHHHNHNHDTTNLNLSIAPSSSYQHYNNFDRIKEIMASEQIMKIAMKEKAYAEEAKREAKRQREIAENEFANAKKIRQKAQAELERAKFLKEQSMKKISSTIMQVTCQTCKGQFQAVAVPAATADETSLVVSYMSSANTDGELENGF.

The segment covering 22 to 31 (SSSDPFLSSS) has biased composition (low complexity). Residues 22-59 (SSSDPFLSSSENGVTTTNTSTQKRKRRPAGTPDPDAEV) are disordered. Positions 32–42 (ENGVTTTNTST) are enriched in polar residues. C2H2-type zinc fingers lie at residues 73–95 (YICE…RRRH), 115–145 (YVCP…RRKH), and 151–178 (WVCE…TRGH). Zn(2+)-binding residues include C153, C156, H169, C173, C180, C182, H195, and C199. A CCHC-type 2; atypical zinc finger spans residues 178-201 (HSCDCGRVFSRVESFIEHQDNCSA). Positions 188 to 200 (RVESFIEHQDNCS) are SHR-binding. Disordered stretches follow at residues 203–253 (RVHR…LEGR) and 281–314 (SSNQ…LNLS). Polar residues predominate over residues 214–248 (TAVTVPACSSRTASTVSTPSSETNYGGTVAVTTPQ). Residues 281-293 (SSNQNPNQENQQQ) show a composition bias toward low complexity. The stretch at 340 to 397 (MKIAMKEKAYAEEAKREAKRQREIAENEFANAKKIRQKAQAELERAKFLKEQSMKKIS) forms a coiled coil.

Mainly expressed in the endodermis, the gravity-sensing tissue in inflorescence stems. Mostly present in stems and flowers, and, to a lower extent, in seedlings, hypocotyls, roots and the shoot apical meristem (SAM).

It localises to the nucleus. Transcription factor involved in inflorescence stems gravitropism, probably by regulating starch accumulation in amyloplasts of graviperceptive cells. Required for stem circumnutation movements. Regulates lateral organ morphogenesis and gravitropic responses. Acts cooperatively with IDD16 to control silique and branche orientation. Involved in the establishment of auxin gradients through the regulation of auxin biosynthesis and transport. The chain is Zinc finger protein SHOOT GRAVITROPISM 5 from Arabidopsis thaliana (Mouse-ear cress).